A 375-amino-acid polypeptide reads, in one-letter code: Chaperone protein DnaJ (375 aa).

One can recognise a J domain in the interval 5–70 (DYYSLLEVER…QKRAAYDRYG (66 aa)). Residues 135–213 (GKTVDIEIDV…CHGEGRCEKH (79 aa)) form a CR-type zinc finger. 8 residues coordinate Zn(2+): C148, C151, C165, C168, C187, C190, C201, and C204. 4 CXXCXGXG motif repeats span residues 148–155 (CDACHGSG), 165–172 (CDTCHGSG), 187–194 (CPVCQGKG), and 201–208 (CPECHGEG).

This sequence belongs to the DnaJ family. In terms of assembly, homodimer. The cofactor is Zn(2+).

Its subcellular location is the cytoplasm. Participates actively in the response to hyperosmotic and heat shock by preventing the aggregation of stress-denatured proteins and by disaggregating proteins, also in an autonomous, DnaK-independent fashion. Unfolded proteins bind initially to DnaJ; upon interaction with the DnaJ-bound protein, DnaK hydrolyzes its bound ATP, resulting in the formation of a stable complex. GrpE releases ADP from DnaK; ATP binding to DnaK triggers the release of the substrate protein, thus completing the reaction cycle. Several rounds of ATP-dependent interactions between DnaJ, DnaK and GrpE are required for fully efficient folding. Also involved, together with DnaK and GrpE, in the DNA replication of plasmids through activation of initiation proteins. This chain is Chaperone protein DnaJ, found in Zymomonas mobilis subsp. mobilis (strain ATCC 31821 / ZM4 / CP4).